Here is a 238-residue protein sequence, read N- to C-terminus: Ubiquinone biosynthesis O-methyltransferase (238 aa).

Arginine 40, glycine 59, aspartate 81, and methionine 126 together coordinate S-adenosyl-L-methionine.

This sequence belongs to the methyltransferase superfamily. UbiG/COQ3 family.

It catalyses the reaction a 3-demethylubiquinol + S-adenosyl-L-methionine = a ubiquinol + S-adenosyl-L-homocysteine + H(+). It carries out the reaction a 3-(all-trans-polyprenyl)benzene-1,2-diol + S-adenosyl-L-methionine = a 2-methoxy-6-(all-trans-polyprenyl)phenol + S-adenosyl-L-homocysteine + H(+). Its pathway is cofactor biosynthesis; ubiquinone biosynthesis. Functionally, O-methyltransferase that catalyzes the 2 O-methylation steps in the ubiquinone biosynthetic pathway. In Neisseria meningitidis serogroup C (strain 053442), this protein is Ubiquinone biosynthesis O-methyltransferase.